A 252-amino-acid chain; its full sequence is Protein IRON-RELATED TRANSCRIPTION FACTOR 3 (252 aa).

The basic motif stretch occupies residues 36–49 (PRKVHKSEREKLKR). Positions 36–86 (PRKVHKSEREKLKRGHLNDLFGELGNMLEADRQSNGKACILTDTTRILRDL) constitute a bHLH domain. The tract at residues 50 to 86 (GHLNDLFGELGNMLEADRQSNGKACILTDTTRILRDL) is helix-loop-helix motif. The stretch at 76–131 (LTDTTRILRDLLSQVKSLRQENSTLQNESNYVTMERNELQDENGALRSEISDLQNE) forms a coiled coil. The interval 135 to 252 (RATGSPGWGH…GLPRMEDEQM (118 aa)) is disordered. Over residues 162-176 (PSQQPMQPSPMTTST) the composition is skewed to low complexity. The span at 208 to 219 (PAEDPEPSEDQE) shows a compositional bias: acidic residues.

This sequence belongs to the bHLH protein family.

The protein localises to the nucleus. Its function is as follows. Transcription factor that acts as a negative regulator of the iron deficiency response. Suppresses the induction of iron deficiency responsive genes, such as NAS1, NAS2, IRO2, IRT1, YSL15, and NRAMP1. This chain is Protein IRON-RELATED TRANSCRIPTION FACTOR 3, found in Oryza sativa subsp. japonica (Rice).